The sequence spans 233 residues: MFDSSQYPYNCFNYDADDYPAGSSDEDKRLTRPAYSYIALIAMAIQQSPAGRVTLSGIYDFIMRKFPYYRANQRAWQNSIRHNLSLNSCFVKVPRSEGHEKGKGNYWTFAGGCESLLDLFENGNYRRRRRRRGPKREGPRGPRAGGAQGPSGPSEPPAAQGRLAPDSAGEGAPGREPPASPAPPGKEHPRDLKFSIDYILSSPDPFPGLKPPCLAQEGRYPRLENVGLHFWTM.

The fork-head DNA-binding region spans 32–130; that stretch reads RPAYSYIALI…ENGNYRRRRR (99 aa). Positions 125 to 134 are enriched in basic residues; the sequence is YRRRRRRRGP. A disordered region spans residues 125–198; the sequence is YRRRRRRRGP…PRDLKFSIDY (74 aa). Over residues 175 to 184 the composition is skewed to pro residues; that stretch reads REPPASPAPP. Residues 185-194 are compositionally biased toward basic and acidic residues; sequence GKEHPRDLKF.

The protein localises to the nucleus. Functionally, probable transcriptional regulator. The protein is Forkhead box protein L3 of Homo sapiens (Human).